A 259-amino-acid polypeptide reads, in one-letter code: Probable 6-phosphogluconolactonase 2 (259 aa).

Belongs to the glucosamine/galactosamine-6-phosphate isomerase family. 6-phosphogluconolactonase subfamily.

The protein resides in the cytoplasm. It is found in the cytosol. It catalyses the reaction 6-phospho-D-glucono-1,5-lactone + H2O = 6-phospho-D-gluconate + H(+). Its pathway is carbohydrate degradation; pentose phosphate pathway; D-ribulose 5-phosphate from D-glucose 6-phosphate (oxidative stage): step 2/3. Catalyzes the hydrolysis of 6-phosphogluconolactone to 6-phosphogluconate. In Arabidopsis thaliana (Mouse-ear cress), this protein is Probable 6-phosphogluconolactonase 2.